The chain runs to 250 residues: 3-deoxy-manno-octulosonate cytidylyltransferase (250 aa).

It belongs to the KdsB family.

It is found in the cytoplasm. It catalyses the reaction 3-deoxy-alpha-D-manno-oct-2-ulosonate + CTP = CMP-3-deoxy-beta-D-manno-octulosonate + diphosphate. It participates in nucleotide-sugar biosynthesis; CMP-3-deoxy-D-manno-octulosonate biosynthesis; CMP-3-deoxy-D-manno-octulosonate from 3-deoxy-D-manno-octulosonate and CTP: step 1/1. Its pathway is bacterial outer membrane biogenesis; lipopolysaccharide biosynthesis. Functionally, activates KDO (a required 8-carbon sugar) for incorporation into bacterial lipopolysaccharide in Gram-negative bacteria. This is 3-deoxy-manno-octulosonate cytidylyltransferase from Francisella philomiragia subsp. philomiragia (strain ATCC 25017 / CCUG 19701 / FSC 153 / O#319-036).